The chain runs to 349 residues: Macrophage-capping protein (349 aa).

N-acetylmethionine is present on Met1. Gelsolin-like repeat units follow at residues 28-107, 147-222, and 264-342; these read KLKP…DLFM, KNIR…AEMI, and LTKV…PIFK. A Nuclear localization signal motif is present at residues 138-147; the sequence is RKLYQVKGKK. Position 338 is a phosphoserine (Ser338).

It belongs to the villin/gelsolin family. Interacts with NUP62. Interacts with NUTF2 and RAN; involved in CAPG nuclear import. In terms of processing, phosphorylated.

The protein resides in the nucleus. Its subcellular location is the cytoplasm. It localises to the melanosome. The protein localises to the cell projection. It is found in the lamellipodium. The protein resides in the ruffle. In terms of biological role, calcium-sensitive protein which reversibly blocks the barbed ends of actin filaments but does not sever preformed actin filaments. May play an important role in macrophage function. May play a role in regulating cytoplasmic and/or nuclear structures through potential interactions with actin. May bind DNA. Uncapping occurs either when Ca(2+) falls or when the concentration of polyphosphoinositide rises, both at low and high Ca(2+). This chain is Macrophage-capping protein (Capg), found in Rattus norvegicus (Rat).